Here is a 266-residue protein sequence, read N- to C-terminus: 3-methyl-2-oxobutanoate hydroxymethyltransferase (266 aa).

Residues aspartate 43 and aspartate 82 each contribute to the Mg(2+) site. Residues 43-44 (DS), aspartate 82, and lysine 110 each bind 3-methyl-2-oxobutanoate. Glutamate 112 provides a ligand contact to Mg(2+). The active-site Proton acceptor is glutamate 179.

This sequence belongs to the PanB family. As to quaternary structure, homodecamer; pentamer of dimers. Mg(2+) is required as a cofactor.

The protein resides in the cytoplasm. It carries out the reaction 3-methyl-2-oxobutanoate + (6R)-5,10-methylene-5,6,7,8-tetrahydrofolate + H2O = 2-dehydropantoate + (6S)-5,6,7,8-tetrahydrofolate. It functions in the pathway cofactor biosynthesis; (R)-pantothenate biosynthesis; (R)-pantoate from 3-methyl-2-oxobutanoate: step 1/2. Its function is as follows. Catalyzes the reversible reaction in which hydroxymethyl group from 5,10-methylenetetrahydrofolate is transferred onto alpha-ketoisovalerate to form ketopantoate. This is 3-methyl-2-oxobutanoate hydroxymethyltransferase from Psychrobacter cryohalolentis (strain ATCC BAA-1226 / DSM 17306 / VKM B-2378 / K5).